We begin with the raw amino-acid sequence, 400 residues long: Nicotinate phosphoribosyltransferase (400 aa).

Position 220 is a phosphohistidine; by autocatalysis (H220).

The protein belongs to the NAPRTase family. Transiently phosphorylated on a His residue during the reaction cycle. Phosphorylation strongly increases the affinity for substrates and increases the rate of nicotinate D-ribonucleotide production. Dephosphorylation regenerates the low-affinity form of the enzyme, leading to product release.

It carries out the reaction nicotinate + 5-phospho-alpha-D-ribose 1-diphosphate + ATP + H2O = nicotinate beta-D-ribonucleotide + ADP + phosphate + diphosphate. It functions in the pathway cofactor biosynthesis; NAD(+) biosynthesis; nicotinate D-ribonucleotide from nicotinate: step 1/1. Catalyzes the synthesis of beta-nicotinate D-ribonucleotide from nicotinate and 5-phospho-D-ribose 1-phosphate at the expense of ATP. The sequence is that of Nicotinate phosphoribosyltransferase from Shigella sonnei (strain Ss046).